The primary structure comprises 395 residues: Putative nickel insertion protein (395 aa).

It belongs to the LarC family.

In Methanopyrus kandleri (strain AV19 / DSM 6324 / JCM 9639 / NBRC 100938), this protein is Putative nickel insertion protein.